Consider the following 258-residue polypeptide: MTLAVRVIPCLDVDAGRVVKGINFKELRDAGDPVELARTYDAEGADELTFLDISASFEGRATTMEIVSRTAEEVFIPLTVGGGVSSVADVDRLLRAGADKVAVNTAAINRPELVAEIADRFGNQVLVLSVDARRVDARRAPGTASGFEVTTHGGRKSAGLDAVEWAVRAADLGAGEILLNAMDADGTQDGFDLELIRAVRREVTVPVIASGGAGAVEHFPPAVEAGADAVLAATVFHFGTLRIADVKASLAGAGYPVR.

Active-site residues include Asp-12 and Asp-131.

The protein belongs to the HisA/HisF family. Heterodimer of HisH and HisF.

The protein resides in the cytoplasm. The catalysed reaction is 5-[(5-phospho-1-deoxy-D-ribulos-1-ylimino)methylamino]-1-(5-phospho-beta-D-ribosyl)imidazole-4-carboxamide + L-glutamine = D-erythro-1-(imidazol-4-yl)glycerol 3-phosphate + 5-amino-1-(5-phospho-beta-D-ribosyl)imidazole-4-carboxamide + L-glutamate + H(+). The protein operates within amino-acid biosynthesis; L-histidine biosynthesis; L-histidine from 5-phospho-alpha-D-ribose 1-diphosphate: step 5/9. Functionally, IGPS catalyzes the conversion of PRFAR and glutamine to IGP, AICAR and glutamate. The HisF subunit catalyzes the cyclization activity that produces IGP and AICAR from PRFAR using the ammonia provided by the HisH subunit. The protein is Imidazole glycerol phosphate synthase subunit HisF of Nocardioides sp. (strain ATCC BAA-499 / JS614).